Here is a 147-residue protein sequence, read N- to C-terminus: Calcium-regulated heat-stable protein 1 (147 aa).

Over residues 1–12 the composition is skewed to pro residues; the sequence is MSSEPPPPPQPP. The tract at residues 1-52 is disordered; the sequence is MSSEPPPPPQPPTHQASVGLLDTPRSRERSPSPLRGNVVPSPLPTRRTRTFS. At Ser-2 the chain carries N-acetylserine. 3 positions are modified to phosphoserine: Ser-30, Ser-32, and Ser-41. Thr-45 carries the post-translational modification Phosphothreonine. A phosphoserine mark is found at Ser-52 and Ser-58. Positions 62-129 constitute a CSD domain; the sequence is VYKGVCKCFC…KLQAVEVVIT (68 aa). Ser-146 and Ser-147 each carry phosphoserine.

Homodimer. Interacts with STYX. Dephosphorylated by calcineurin in a Ca(2+) dependent manner. Can be phosphorylated by DYRK2 (in vitro).

It localises to the cytoplasm. The protein localises to the P-body. It is found in the cytoplasmic granule. Binds mRNA and regulates the stability of target mRNA. Binds single-stranded DNA (in vitro). This Homo sapiens (Human) protein is Calcium-regulated heat-stable protein 1 (CARHSP1).